Consider the following 446-residue polypeptide: Exodeoxyribonuclease 7 large subunit (446 aa).

It belongs to the XseA family. In terms of assembly, heterooligomer composed of large and small subunits.

The protein resides in the cytoplasm. It catalyses the reaction Exonucleolytic cleavage in either 5'- to 3'- or 3'- to 5'-direction to yield nucleoside 5'-phosphates.. Bidirectionally degrades single-stranded DNA into large acid-insoluble oligonucleotides, which are then degraded further into small acid-soluble oligonucleotides. This chain is Exodeoxyribonuclease 7 large subunit, found in Streptococcus gordonii (strain Challis / ATCC 35105 / BCRC 15272 / CH1 / DL1 / V288).